Here is a 221-residue protein sequence, read N- to C-terminus: Transmembrane protein 267 (221 aa).

The next 5 helical transmembrane spans lie at 28–48 (ASAGLGAFCFVADHFLTLPFI), 57–77 (LFDNTVHAIIGLWSWAIVIGL), 86–106 (VILAGFLASVIDLDHFYMAGS), 121–141 (LHCSTLIPALCFSLRLLMWAC), and 182–204 (ISYWLYVTITATLPHLCSVLMYL).

It is found in the membrane. The sequence is that of Transmembrane protein 267 (tmem267) from Danio rerio (Zebrafish).